The primary structure comprises 196 residues: UPF0301 protein BT_1078 (196 aa).

The protein belongs to the UPF0301 (AlgH) family.

In Bacteroides thetaiotaomicron (strain ATCC 29148 / DSM 2079 / JCM 5827 / CCUG 10774 / NCTC 10582 / VPI-5482 / E50), this protein is UPF0301 protein BT_1078.